Here is a 181-residue protein sequence, read N- to C-terminus: Translation initiation factor IF-3 (181 aa).

The protein belongs to the IF-3 family. In terms of assembly, monomer.

The protein resides in the cytoplasm. In terms of biological role, IF-3 binds to the 30S ribosomal subunit and shifts the equilibrium between 70S ribosomes and their 50S and 30S subunits in favor of the free subunits, thus enhancing the availability of 30S subunits on which protein synthesis initiation begins. This Pseudoalteromonas translucida (strain TAC 125) protein is Translation initiation factor IF-3.